Here is a 292-residue protein sequence, read N- to C-terminus: 2-(5''-triphosphoribosyl)-3'-dephosphocoenzyme-A synthase (292 aa).

Belongs to the CitG/MdcB family.

It carries out the reaction 3'-dephospho-CoA + ATP = 2'-(5''-triphospho-alpha-D-ribosyl)-3'-dephospho-CoA + adenine. In terms of biological role, catalyzes the formation of 2-(5''-triphosphoribosyl)-3'-dephosphocoenzyme-A, the precursor of the prosthetic group of the holo-acyl carrier protein (gamma chain) of citrate lyase, from ATP and dephospho-CoA. The protein is 2-(5''-triphosphoribosyl)-3'-dephosphocoenzyme-A synthase of Escherichia coli O139:H28 (strain E24377A / ETEC).